We begin with the raw amino-acid sequence, 137 residues long: BolA-like protein 1 (137 aa).

Phosphoserine is present on Ser-81. Positions 114 to 137 (WRENSQLDTSPPCLGGNKKTLGTP) are disordered.

It belongs to the BolA/IbaG family. In terms of assembly, interacts with GLRX5. In terms of tissue distribution, widely expressed.

The protein resides in the mitochondrion. In terms of biological role, acts as a mitochondrial iron-sulfur (Fe-S) cluster assembly factor that facilitates (Fe-S) cluster insertion into a subset of mitochondrial proteins. Probably acts together with the monothiol glutaredoxin GLRX5. May protect cells against oxidative stress. In Homo sapiens (Human), this protein is BolA-like protein 1.